Reading from the N-terminus, the 114-residue chain is MVVGIGIDVVQLKRFLTLVETSDCFAKRLLTSNELNSYWKLNNNQRANFLAVHWTLKEAIYKATSHIKPLFTKLEIYKLNNQYRCEFIQNINLLLSVSYTNCHVSAICLAQQNG.

2 residues coordinate Mg(2+): D8 and E58.

The protein belongs to the P-Pant transferase superfamily. AcpS family. Mg(2+) is required as a cofactor.

The protein localises to the cytoplasm. It carries out the reaction apo-[ACP] + CoA = holo-[ACP] + adenosine 3',5'-bisphosphate + H(+). Its function is as follows. Transfers the 4'-phosphopantetheine moiety from coenzyme A to a Ser of acyl-carrier-protein. This is Holo-[acyl-carrier-protein] synthase from Mycoplasma genitalium (strain ATCC 33530 / DSM 19775 / NCTC 10195 / G37) (Mycoplasmoides genitalium).